The primary structure comprises 64 residues: Large ribosomal subunit protein bL35 (64 aa).

It belongs to the bacterial ribosomal protein bL35 family.

The polypeptide is Large ribosomal subunit protein bL35 (Vibrio atlanticus (strain LGP32) (Vibrio splendidus (strain Mel32))).